The primary structure comprises 115 residues: Peptidyl-tRNA hydrolase (115 aa).

Belongs to the PTH2 family.

The protein resides in the cytoplasm. The catalysed reaction is an N-acyl-L-alpha-aminoacyl-tRNA + H2O = an N-acyl-L-amino acid + a tRNA + H(+). Functionally, the natural substrate for this enzyme may be peptidyl-tRNAs which drop off the ribosome during protein synthesis. In Archaeoglobus fulgidus (strain ATCC 49558 / DSM 4304 / JCM 9628 / NBRC 100126 / VC-16), this protein is Peptidyl-tRNA hydrolase.